The following is a 451-amino-acid chain: Endosomal transmembrane epsin interactor 1 (451 aa).

The N-terminal stretch at 1 to 29 (MILLVNLFVLLSVVCILLNLAGFILGCQG) is a signal peptide. The Lumenal portion of the chain corresponds to 30-85 (AQFVSSVPRCDLVDLGEGKICFCCEEFQPAKCTDKENALKLFPVQPCSAVHLLLKK). Residues 86-106 (VLFALCALNALTTTVCLVAAA) traverse the membrane as a helical segment. Residues 107 to 451 (LRYLQIFASR…LIGVIRETVL (345 aa)) lie on the Cytoplasmic side of the membrane. The segment at 107 to 451 (LRYLQIFASR…LIGVIRETVL (345 aa)) is mediates interaction with EPN1. 2 consecutive short sequence motifs (PPxY; mediates interaction with ITCH) follow at residues 148-151 (PPSY) and 194-197 (PPPY). Residues 204–213 (TDQEQESSFQ) are compositionally biased toward polar residues. The interval 204–224 (TDQEQESSFQMPEGPETAASP) is disordered. K274 participates in a covalent cross-link: Glycyl lysine isopeptide (Lys-Gly) (interchain with G-Cter in ubiquitin). Residue S275 is modified to Phosphoserine. A Glycyl lysine isopeptide (Lys-Gly) (interchain with G-Cter in ubiquitin) cross-link involves residue K365.

The protein belongs to the ENTREP family. Interacts with ITCH; enhances the ubiquitination of CXCR4 by ITCH and the subsequent endocytosis and desensitization of the receptor. Interacts with EPN1.

It is found in the early endosome membrane. Its subcellular location is the late endosome membrane. The protein resides in the recycling endosome membrane. The protein localises to the cell membrane. In terms of biological role, functions as an activator of the E3 ubiquitin protein ligase ITCH in the ubiquitination of the CXCL12-activated CXCR4 receptor. Thereby, triggers CXCR4 endocytosis and desensitization, negatively regulating the CXCL12/CXCR4 signaling pathway. The sequence is that of Endosomal transmembrane epsin interactor 1 from Mus musculus (Mouse).